The following is a 234-amino-acid chain: Leucyl/phenylalanyl-tRNA--protein transferase (234 aa).

The protein belongs to the L/F-transferase family.

It is found in the cytoplasm. The enzyme catalyses N-terminal L-lysyl-[protein] + L-leucyl-tRNA(Leu) = N-terminal L-leucyl-L-lysyl-[protein] + tRNA(Leu) + H(+). The catalysed reaction is N-terminal L-arginyl-[protein] + L-leucyl-tRNA(Leu) = N-terminal L-leucyl-L-arginyl-[protein] + tRNA(Leu) + H(+). It catalyses the reaction L-phenylalanyl-tRNA(Phe) + an N-terminal L-alpha-aminoacyl-[protein] = an N-terminal L-phenylalanyl-L-alpha-aminoacyl-[protein] + tRNA(Phe). Its function is as follows. Functions in the N-end rule pathway of protein degradation where it conjugates Leu, Phe and, less efficiently, Met from aminoacyl-tRNAs to the N-termini of proteins containing an N-terminal arginine or lysine. The chain is Leucyl/phenylalanyl-tRNA--protein transferase from Escherichia coli O45:K1 (strain S88 / ExPEC).